The following is a 963-amino-acid chain: Kinesin-1 heavy chain (963 aa).

Position 2 is an N-acetylalanine (A2). The 318-residue stretch at 8-325 (NIKVMCRFRP…LLFGQRAKTI (318 aa)) folds into the Kinesin motor domain. 85-92 (GQTSSGKT) contributes to the ATP binding site. K213 participates in a covalent cross-link: Glycyl lysine isopeptide (Lys-Gly) (interchain with G-Cter in SUMO2). Residues 330 to 913 (CVNVELTAEQ…EAVRSKNMAR (584 aa)) are a coiled coil. The tract at residues 908–963 (SKNMARRGHSAQIAKPIRPGQHPAASPTHPGAVRGGGSFVQNNQPVGLRGGGGKQA) is disordered. The globular stretch occupies residues 915 to 963 (GHSAQIAKPIRPGQHPAASPTHPGAVRGGGSFVQNNQPVGLRGGGGKQA). Phosphoserine occurs at positions 933 and 945. Residue R956 is modified to Omega-N-methylarginine.

The protein belongs to the TRAFAC class myosin-kinesin ATPase superfamily. Kinesin family. Kinesin subfamily. Oligomer composed of two heavy chains and two light chains. Interacts with GRIP1 and PPP1R42. Interacts with SYBU. Interacts with JAKMIP1. Interacts with PLEKHM2. Interacts with ECPAS. Interacts with ZFYVE27. Found in a complex with OGT, RHOT1, RHOT2 and TRAK1. Interacts with APP (via cytoplasmic domain). In terms of tissue distribution, expressed in the brain (at protein level). Expressed in the brain, liver, kidney, spleen, heart, lung and sciatic nerve.

The protein localises to the cytoplasm. The protein resides in the cytoskeleton. It localises to the cytolytic granule membrane. It is found in the lysosome membrane. Microtubule-dependent motor required for normal distribution of mitochondria and lysosomes. Can induce formation of neurite-like membrane protrusions in non-neuronal cells in a ZFYVE27-dependent manner. Regulates centrosome and nuclear positioning during mitotic entry. During the G2 phase of the cell cycle in a BICD2-dependent manner, antagonizes dynein function and drives the separation of nuclei and centrosomes. Required for anterograde axonal transportation of MAPK8IP3/JIP3 which is essential for MAPK8IP3/JIP3 function in axon elongation. Through binding with PLEKHM2 and ARL8B, directs lysosome movement toward microtubule plus ends. Involved in NK cell-mediated cytotoxicity. Drives the polarization of cytolytic granules and microtubule-organizing centers (MTOCs) toward the immune synapse between effector NK lymphocytes and target cells. This is Kinesin-1 heavy chain from Rattus norvegicus (Rat).